A 302-amino-acid chain; its full sequence is Ribonucleoside-diphosphate reductase small subunit (302 aa).

3 residues coordinate Fe cation: Glu61, Glu91, and His94. The active site involves Tyr98. Residues Ile147 to Leu167 form a helical membrane-spanning segment. The Fe cation site is built by Glu154, Glu188, and His191.

Belongs to the ribonucleoside diphosphate reductase small chain family. In terms of assembly, heterotetramer composed of a homodimer of the large subunit (R1) and a homodimer of the small subunit (R2). Larger multisubunit protein complex are also active, composed of (R1)n(R2)n. The cofactor is Fe cation.

The protein localises to the host membrane. It carries out the reaction a 2'-deoxyribonucleoside 5'-diphosphate + [thioredoxin]-disulfide + H2O = a ribonucleoside 5'-diphosphate + [thioredoxin]-dithiol. Its function is as follows. Ribonucleoside-diphosphate reductase holoenzyme provides the precursors necessary for viral DNA synthesis. Allows virus growth in non-dividing cells, as well as reactivation from latency in infected hosts. Catalyzes the biosynthesis of deoxyribonucleotides from the corresponding ribonucleotides. The chain is Ribonucleoside-diphosphate reductase small subunit from Homo sapiens (Human).